The chain runs to 171 residues: uncharacterized protein (171 aa).

A signal peptide spans 1 to 20 (MRDFYLFLGAVFLLVLGVWA).

This is an uncharacterized protein from Aquifex aeolicus (strain VF5).